The primary structure comprises 483 residues: Regulatory protein ViaA (483 aa).

The protein belongs to the ViaA family. Homodimer. Interacts with RavA.

The protein localises to the cytoplasm. Its function is as follows. Component of the RavA-ViaA chaperone complex, which may act on the membrane to optimize the function of some of the respiratory chains. ViaA stimulates the ATPase activity of RavA. In Cronobacter sakazakii (strain ATCC BAA-894) (Enterobacter sakazakii), this protein is Regulatory protein ViaA.